The primary structure comprises 636 residues: Biosynthetic arginine decarboxylase (636 aa).

Lys-101 is modified (N6-(pyridoxal phosphate)lysine). 286–296 serves as a coordination point for substrate; that stretch reads FDVGGGLAVDY.

The protein belongs to the Orn/Lys/Arg decarboxylase class-II family. SpeA subfamily. Mg(2+) is required as a cofactor. It depends on pyridoxal 5'-phosphate as a cofactor.

It carries out the reaction L-arginine + H(+) = agmatine + CO2. Its pathway is amine and polyamine biosynthesis; agmatine biosynthesis; agmatine from L-arginine: step 1/1. Catalyzes the biosynthesis of agmatine from arginine. This is Biosynthetic arginine decarboxylase from Shewanella amazonensis (strain ATCC BAA-1098 / SB2B).